A 331-amino-acid polypeptide reads, in one-letter code: Ketol-acid reductoisomerase (NADP(+)) (331 aa).

A KARI N-terminal Rossmann domain is found at Ala2–Thr182. NADP(+) is bound by residues Tyr25–Gln28, Ser51, Ser53, and Asp83–Gln86. Residue His108 is part of the active site. Gly134 contributes to the NADP(+) binding site. Residues Asn183 to Leu328 form the KARI C-terminal knotted domain. Positions 191, 195, 227, and 231 each coordinate Mg(2+). Residue Ser252 participates in substrate binding.

It belongs to the ketol-acid reductoisomerase family. Mg(2+) serves as cofactor.

The catalysed reaction is (2R)-2,3-dihydroxy-3-methylbutanoate + NADP(+) = (2S)-2-acetolactate + NADPH + H(+). It catalyses the reaction (2R,3R)-2,3-dihydroxy-3-methylpentanoate + NADP(+) = (S)-2-ethyl-2-hydroxy-3-oxobutanoate + NADPH + H(+). It functions in the pathway amino-acid biosynthesis; L-isoleucine biosynthesis; L-isoleucine from 2-oxobutanoate: step 2/4. Its pathway is amino-acid biosynthesis; L-valine biosynthesis; L-valine from pyruvate: step 2/4. Involved in the biosynthesis of branched-chain amino acids (BCAA). Catalyzes an alkyl-migration followed by a ketol-acid reduction of (S)-2-acetolactate (S2AL) to yield (R)-2,3-dihydroxy-isovalerate. In the isomerase reaction, S2AL is rearranged via a Mg-dependent methyl migration to produce 3-hydroxy-3-methyl-2-ketobutyrate (HMKB). In the reductase reaction, this 2-ketoacid undergoes a metal-dependent reduction by NADPH to yield (R)-2,3-dihydroxy-isovalerate. This is Ketol-acid reductoisomerase (NADP(+)) from Synechococcus sp. (strain CC9605).